We begin with the raw amino-acid sequence, 153 residues long: ORM1-like protein 3 (153 aa).

The segment at 1–17 is important for ceramide level-sensing; sequence MNVGTAHSEVNPNTRVM. The Cytoplasmic portion of the chain corresponds to 1 to 21; that stretch reads MNVGTAHSEVNPNTRVMNSRG. 2 consecutive transmembrane segments (helical) span residues 22–42 and 43–63; these read IWLS…SIPF and VSVP…MYIF. The Cytoplasmic segment spans residues 64 to 94; that stretch reads LHTVKGTPFETPDQGKARLLTHWEQMDYGVQ. A helical transmembrane segment spans residues 95–117; the sequence is FTASRKFLTITPIVLYFLTSFYT. Residues 118 to 121 lie on the Extracellular side of the membrane; that stretch reads KYDQ. Residues 122–142 traverse the membrane as a helical segment; sequence IHFVLNTVSLMSVLIPKLPQL. A Hydroxyproline modification is found at Pro-137. The Cytoplasmic portion of the chain corresponds to 143 to 153; that stretch reads HGVRIFGINKY.

This sequence belongs to the ORM family. In terms of assembly, ceramide-sensitive subunit of the serine palmitoyltransferase (SPT) complex, which is also composed of SPTLC1, SPTLC2/3 and SPTSSA/B. In terms of processing, when hydroxylated at Pro-137, ubiquitinated via 'Lys-48'-linkage, leading to proteasomal degradation. In endothelial cells, ORMDL3 proteasomal degradation is controlled by the sphingosine 1-phosphate receptor signaling pathway.

The protein resides in the endoplasmic reticulum membrane. In terms of biological role, plays an essential role in the homeostatic regulation of sphingolipid de novo biosynthesis by modulating the activity of the serine palmitoyltransferase (SPT) in response to ceramide levels. When complexed to SPT, the binding of ceramides to its N-terminus stabilizes a conformation that block SPT substrate entry, hence preventing SPT catalytic activity. Through this mechanism, maintains ceramide levels at sufficient concentrations for the production of complex sphingolipids, but which prevents the accumulation of ceramides to levels that trigger apoptosis. The protein is ORM1-like protein 3 (ORMDL3) of Ailuropoda melanoleuca (Giant panda).